The following is a 206-amino-acid chain: CBS domain-containing protein CBSX3, mitochondrial (206 aa).

The N-terminal 39 residues, 1 to 39 (MQGVIRSFVSGGNVVKGSVLQHLRVINPAIQPSVFCSRS), are a transit peptide targeting the mitochondrion. CBS domains lie at 61–127 (MKSK…GRSS) and 136–194 (MTEE…HREE).

It localises to the mitochondrion. In Arabidopsis thaliana (Mouse-ear cress), this protein is CBS domain-containing protein CBSX3, mitochondrial (CBSX3).